The sequence spans 61 residues: Potassium channel toxin alpha-KTx 18.1 (61 aa).

The N-terminal stretch at Met1–Val24 is a signal peptide. 3 disulfide bridges follow: Cys33–Cys52, Cys38–Cys57, and Cys42–Cys59.

Expressed by the venom gland.

It localises to the secreted. Its function is as follows. Reversible blocker of both Kv1.3/KCNA3 potassium channels (high affinity) and Shaker B (mammalian Kv1.1 analog) potassium channels (very low affinity). This is Potassium channel toxin alpha-KTx 18.1 from Tityus obscurus (Amazonian scorpion).